The following is a 151-amino-acid chain: Aspartate carbamoyltransferase regulatory chain (151 aa).

Residues Cys-108, Cys-113, Cys-138, and Cys-141 each coordinate Zn(2+).

The protein belongs to the PyrI family. In terms of assembly, contains catalytic and regulatory chains. Zn(2+) serves as cofactor.

Involved in allosteric regulation of aspartate carbamoyltransferase. The chain is Aspartate carbamoyltransferase regulatory chain from Pyrobaculum neutrophilum (strain DSM 2338 / JCM 9278 / NBRC 100436 / V24Sta) (Thermoproteus neutrophilus).